The sequence spans 757 residues: Polyribonucleotide nucleotidyltransferase (757 aa).

Mg(2+) contacts are provided by aspartate 489 and aspartate 495. Residues 556–615 (PKILCYKIDKDVVHKVIGSGGKTIRGISSDTSAKIDIDQNNYVYIMADTEEALMEAKTRV) form the KH domain. The S1 motif domain occupies 632-700 (GELYDGKIVS…SDGKIKLTMR (69 aa)). Positions 702 to 757 (DEDRVGSGGSSSSPKKRFGAHPRKNGKDNRSNNSERGFNERSGSAEGSSISRKRFF) are disordered. A compositionally biased stretch (basic residues) spans 715–725 (PKKRFGAHPRK). Polar residues predominate over residues 732-751 (SNNSERGFNERSGSAEGSSI).

The protein belongs to the polyribonucleotide nucleotidyltransferase family. Mg(2+) serves as cofactor.

The protein localises to the cytoplasm. It catalyses the reaction RNA(n+1) + phosphate = RNA(n) + a ribonucleoside 5'-diphosphate. In terms of biological role, involved in mRNA degradation. Catalyzes the phosphorolysis of single-stranded polyribonucleotides processively in the 3'- to 5'-direction. The protein is Polyribonucleotide nucleotidyltransferase of Neorickettsia sennetsu (strain ATCC VR-367 / Miyayama) (Ehrlichia sennetsu).